Reading from the N-terminus, the 174-residue chain is Peroxisome assembly protein 22 (174 aa).

A helical transmembrane segment spans residues 9-27; the sequence is GYLAIIAAVSIGAAAYLWW.

Belongs to the peroxin-22 family.

Its subcellular location is the peroxisome membrane. Functionally, involved in peroxisome biogenesis. The sequence is that of Peroxisome assembly protein 22 (PEX22) from Candida glabrata (strain ATCC 2001 / BCRC 20586 / JCM 3761 / NBRC 0622 / NRRL Y-65 / CBS 138) (Yeast).